We begin with the raw amino-acid sequence, 493 residues long: Glutamyl-tRNA(Gln) amidotransferase subunit A (493 aa).

Catalysis depends on charge relay system residues Lys78 and Ser158. Ser182 (acyl-ester intermediate) is an active-site residue.

It belongs to the amidase family. GatA subfamily. Heterotrimer of A, B and C subunits.

The catalysed reaction is L-glutamyl-tRNA(Gln) + L-glutamine + ATP + H2O = L-glutaminyl-tRNA(Gln) + L-glutamate + ADP + phosphate + H(+). In terms of biological role, allows the formation of correctly charged Gln-tRNA(Gln) through the transamidation of misacylated Glu-tRNA(Gln) in organisms which lack glutaminyl-tRNA synthetase. The reaction takes place in the presence of glutamine and ATP through an activated gamma-phospho-Glu-tRNA(Gln). The sequence is that of Glutamyl-tRNA(Gln) amidotransferase subunit A from Rickettsia conorii (strain ATCC VR-613 / Malish 7).